Consider the following 384-residue polypeptide: 4-hydroxy-3-methylbut-2-en-1-yl diphosphate synthase (flavodoxin) (384 aa).

[4Fe-4S] cluster contacts are provided by cysteine 280, cysteine 283, cysteine 315, and glutamate 322.

Belongs to the IspG family. [4Fe-4S] cluster serves as cofactor.

The enzyme catalyses (2E)-4-hydroxy-3-methylbut-2-enyl diphosphate + oxidized [flavodoxin] + H2O + 2 H(+) = 2-C-methyl-D-erythritol 2,4-cyclic diphosphate + reduced [flavodoxin]. Its pathway is isoprenoid biosynthesis; isopentenyl diphosphate biosynthesis via DXP pathway; isopentenyl diphosphate from 1-deoxy-D-xylulose 5-phosphate: step 5/6. Functionally, converts 2C-methyl-D-erythritol 2,4-cyclodiphosphate (ME-2,4cPP) into 1-hydroxy-2-methyl-2-(E)-butenyl 4-diphosphate. The protein is 4-hydroxy-3-methylbut-2-en-1-yl diphosphate synthase (flavodoxin) of Parafrankia sp. (strain EAN1pec).